The following is a 260-amino-acid chain: NAD kinase (260 aa).

The active-site Proton acceptor is Asp49. NAD(+) contacts are provided by residues 49 to 50 (DG), 119 to 120 (NE), Asp149, Ala157, and 160 to 165 (TAYNLS).

Belongs to the NAD kinase family. The cofactor is a divalent metal cation.

The protein localises to the cytoplasm. It carries out the reaction NAD(+) + ATP = ADP + NADP(+) + H(+). In terms of biological role, involved in the regulation of the intracellular balance of NAD and NADP, and is a key enzyme in the biosynthesis of NADP. Catalyzes specifically the phosphorylation on 2'-hydroxyl of the adenosine moiety of NAD to yield NADP. This is NAD kinase from Caulobacter vibrioides (strain ATCC 19089 / CIP 103742 / CB 15) (Caulobacter crescentus).